The primary structure comprises 485 residues: Cysteine--tRNA ligase (485 aa).

Residue Cys27 coordinates Zn(2+). The 'HIGH' region motif lies at 29-39 (ITAYDLCHIGH). Cys208, His233, and Glu237 together coordinate Zn(2+). The 'KMSKS' region signature appears at 265 to 269 (KMSKS). An ATP-binding site is contributed by Lys268.

Belongs to the class-I aminoacyl-tRNA synthetase family. As to quaternary structure, monomer. It depends on Zn(2+) as a cofactor.

It is found in the cytoplasm. It carries out the reaction tRNA(Cys) + L-cysteine + ATP = L-cysteinyl-tRNA(Cys) + AMP + diphosphate. This is Cysteine--tRNA ligase from Nitratidesulfovibrio vulgaris (strain DSM 19637 / Miyazaki F) (Desulfovibrio vulgaris).